The following is a 190-amino-acid chain: Xanthine phosphoribosyltransferase (190 aa).

Xanthine-binding residues include leucine 20 and asparagine 27. 128–132 (ANGQA) is a 5-phospho-alpha-D-ribose 1-diphosphate binding site. Lysine 156 lines the xanthine pocket.

The protein belongs to the purine/pyrimidine phosphoribosyltransferase family. Xpt subfamily. In terms of assembly, homodimer.

It localises to the cytoplasm. The enzyme catalyses XMP + diphosphate = xanthine + 5-phospho-alpha-D-ribose 1-diphosphate. The protein operates within purine metabolism; XMP biosynthesis via salvage pathway; XMP from xanthine: step 1/1. Converts the preformed base xanthine, a product of nucleic acid breakdown, to xanthosine 5'-monophosphate (XMP), so it can be reused for RNA or DNA synthesis. The chain is Xanthine phosphoribosyltransferase from Pediococcus pentosaceus (strain ATCC 25745 / CCUG 21536 / LMG 10740 / 183-1w).